We begin with the raw amino-acid sequence, 197 residues long: MDLITQLQDKLDHLLYVFGTCIGVLQRDAPPSFFNNPQNQQQQQQQQQQQQQQQQQQQQQQNPQTQQQLPPPPPPPPQQQQQQQQQQQQQQQQQQQQQQQQPQPTEEWDAPSKMALQVIETSKVIESYIEKLPGFDKTEDQQYEDLKNLNTQSKQVSNELLSSRRDAIELLKMVKESILYISEESKNEEIDQQPMQQ.

Residues 29–110 (APPSFFNNPQ…QPQPTEEWDA (82 aa)) form a disordered region. The segment covering 37–68 (PQNQQQQQQQQQQQQQQQQQQQQQQNPQTQQQ) has biased composition (low complexity). The stretch at 38–101 (QNQQQQQQQQ…QQQQQQQQQQ (64 aa)) forms a coiled coil. Residues 69-78 (LPPPPPPPPQ) are compositionally biased toward pro residues. Positions 79–104 (QQQQQQQQQQQQQQQQQQQQQQQPQP) are enriched in low complexity.

The protein belongs to the Mediator complex subunit 21 family. In terms of assembly, component of the Mediator complex.

The protein resides in the nucleus. Functionally, component of the Mediator complex, a coactivator involved in the regulated transcription of nearly all RNA polymerase II-dependent genes. Mediator functions as a bridge to convey information from gene-specific regulatory proteins to the basal RNA polymerase II transcription machinery. Mediator is recruited to promoters by direct interactions with regulatory proteins and serves as a scaffold for the assembly of a functional preinitiation complex with RNA polymerase II and the general transcription factors. The chain is Putative mediator of RNA polymerase II transcription subunit 21 (med21) from Dictyostelium discoideum (Social amoeba).